The primary structure comprises 1368 residues: DNA-directed RNA polymerase subunit beta (1368 aa).

Belongs to the RNA polymerase beta chain family. In terms of assembly, the RNAP catalytic core consists of 2 alpha, 1 beta, 1 beta' and 1 omega subunit. When a sigma factor is associated with the core the holoenzyme is formed, which can initiate transcription.

It catalyses the reaction RNA(n) + a ribonucleoside 5'-triphosphate = RNA(n+1) + diphosphate. Functionally, DNA-dependent RNA polymerase catalyzes the transcription of DNA into RNA using the four ribonucleoside triphosphates as substrates. This is DNA-directed RNA polymerase subunit beta from Burkholderia cenocepacia (strain HI2424).